The following is a 284-amino-acid chain: Tropomyosin alpha-1 chain (284 aa).

The tract at residues 1 to 38 (MDAIKKKMQMLKLDKENALDRAEQAEADKKAAEERSKQ) is disordered. A coiled-coil region spans residues 1-284 (MDAIKKKMQM…DHALNDMTSI (284 aa)). Over residues 12 to 38 (KLDKENALDRAEQAEADKKAAEERSKQ) the composition is skewed to basic and acidic residues.

The protein belongs to the tropomyosin family. In terms of assembly, homodimer. Heterodimer of an alpha (TPM1, TPM3 or TPM4) and a beta (TPM2) chain. Interacts with HRG (via the HRR domain); the interaction contributes to the antiangiogenic properties of the histidine/proline-rich region (HRR) of HRG.

It localises to the cytoplasm. Its subcellular location is the cytoskeleton. Its function is as follows. Binds to actin filaments in muscle and non-muscle cells. Plays a central role, in association with the troponin complex, in the calcium dependent regulation of vertebrate striated muscle contraction. Smooth muscle contraction is regulated by interaction with caldesmon. In non-muscle cells is implicated in stabilizing cytoskeleton actin filaments. The chain is Tropomyosin alpha-1 chain (TPM1) from Coturnix japonica (Japanese quail).